Here is a 329-residue protein sequence, read N- to C-terminus: G-protein coupled bile acid receptor 1 (329 aa).

Residues 1-15 (MMTPNSTELSAIPMG) are Extracellular-facing. A glycan (N-linked (GlcNAc...) asparagine) is linked at Asn5. The chain crosses the membrane as a helical span at residues 16–36 (VLGLSLALASLIVIANLLLAL). Residues 37–49 (GIALDRHLRSPPA) lie on the Cytoplasmic side of the membrane. The helical transmembrane segment at 50–70 (GCFFLSLLLAGLLTGLALPML) threads the bilayer. Residues 71–84 (PGLWSRNHQGYWSC) lie on the Extracellular side of the membrane. A disulfide bridge connects residues Cys84 and Cys154. The helical transmembrane segment at 85–105 (LLLHLTPNFCFLSLLANLLLV) threads the bilayer. Residues 106–124 (HGERYMAVLQPLRPHGSVR) lie on the Cytoplasmic side of the membrane. Residues 125–145 (LALFLTWVSSLFFASLPALGW) traverse the membrane as a helical segment. Topologically, residues 146 to 164 (NHWSPDANCSSQAVFPAPY) are extracellular. Residue Asn153 is glycosylated (N-linked (GlcNAc...) asparagine). A helical transmembrane segment spans residues 165–185 (LYLEVYGLLLPAVGATALLSV). The Cytoplasmic portion of the chain corresponds to 186–229 (RVLATAHRQLCEIRRLERAVCRDVPSTLARALTWRQARAQAGAT). Residues 230-250 (LLFLLCWGPYVATLLLSVLAY) traverse the membrane as a helical segment. Residues 251–260 (ERRPPLGPGT) lie on the Extracellular side of the membrane. The chain crosses the membrane as a helical span at residues 261–281 (LLSLISLGSTSAAAVPVAMGL). The Cytoplasmic segment spans residues 282-329 (GDQRYTAPWRTAAQRCLRVLRGRAKRDNPGPSTAYHTSSQCSIDLDLN).

Belongs to the G-protein coupled receptor 1 family.

Its subcellular location is the cell membrane. Receptor for bile acid. Bile acid-binding induces its internalization, activation of extracellular signal-regulated kinase and intracellular cAMP production. May be involved in the suppression of macrophage functions by bile acids. Involved in bile acid promoted GLP1R secretion. The chain is G-protein coupled bile acid receptor 1 (Gpbar1) from Mus musculus (Mouse).